A 218-amino-acid chain; its full sequence is Probable nicotinate-nucleotide adenylyltransferase (218 aa).

It belongs to the NadD family.

It carries out the reaction nicotinate beta-D-ribonucleotide + ATP + H(+) = deamido-NAD(+) + diphosphate. It functions in the pathway cofactor biosynthesis; NAD(+) biosynthesis; deamido-NAD(+) from nicotinate D-ribonucleotide: step 1/1. Its function is as follows. Catalyzes the reversible adenylation of nicotinate mononucleotide (NaMN) to nicotinic acid adenine dinucleotide (NaAD). The chain is Probable nicotinate-nucleotide adenylyltransferase from Sodalis glossinidius (strain morsitans).